Here is an 870-residue protein sequence, read N- to C-terminus: DNA mismatch repair protein MutS (870 aa).

Residue 622–629 (GPNMGGKS) participates in ATP binding.

The protein belongs to the DNA mismatch repair MutS family.

Functionally, this protein is involved in the repair of mismatches in DNA. It is possible that it carries out the mismatch recognition step. This protein has a weak ATPase activity. This chain is DNA mismatch repair protein MutS, found in Methylibium petroleiphilum (strain ATCC BAA-1232 / LMG 22953 / PM1).